The primary structure comprises 187 residues: ATP synthase subunit delta (187 aa).

It belongs to the ATPase delta chain family. F-type ATPases have 2 components, F(1) - the catalytic core - and F(0) - the membrane proton channel. F(1) has five subunits: alpha(3), beta(3), gamma(1), delta(1), epsilon(1). F(0) has three main subunits: a(1), b(2) and c(10-14). The alpha and beta chains form an alternating ring which encloses part of the gamma chain. F(1) is attached to F(0) by a central stalk formed by the gamma and epsilon chains, while a peripheral stalk is formed by the delta and b chains.

The protein localises to the cell membrane. Its function is as follows. F(1)F(0) ATP synthase produces ATP from ADP in the presence of a proton or sodium gradient. F-type ATPases consist of two structural domains, F(1) containing the extramembraneous catalytic core and F(0) containing the membrane proton channel, linked together by a central stalk and a peripheral stalk. During catalysis, ATP synthesis in the catalytic domain of F(1) is coupled via a rotary mechanism of the central stalk subunits to proton translocation. In terms of biological role, this protein is part of the stalk that links CF(0) to CF(1). It either transmits conformational changes from CF(0) to CF(1) or is implicated in proton conduction. This is ATP synthase subunit delta from Mesomycoplasma hyopneumoniae (strain 7448) (Mycoplasma hyopneumoniae).